We begin with the raw amino-acid sequence, 220 residues long: Protein Syd (220 aa).

It belongs to the Syd family.

The protein resides in the cell inner membrane. Interacts with the SecY protein in vivo. May bind preferentially to an uncomplexed state of SecY, thus functioning either as a chelating agent for excess SecY in the cell or as a regulatory factor that negatively controls the translocase function. The protein is Protein Syd of Shewanella loihica (strain ATCC BAA-1088 / PV-4).